Here is a 255-residue protein sequence, read N- to C-terminus: Gene 54 protein (255 aa).

This Mycobacterium (Mycobacteriophage L5) protein is Gene 54 protein (54).